The following is a 316-amino-acid chain: NADH-cytochrome b5 reductase-like (316 aa).

The region spanning 17–53 (KPVEPLPSQCCGSGCSPCVFDLYYRDLERWETARARN) is the Oxidoreductase-like domain. Positions 76 to 178 (ETFLAFHIST…RGPFGSFLYE (103 aa)) constitute an FAD-binding FR-type domain. Residues 158-173 (ESWR…GPFG) and 183-215 (GELL…TFVT) each bind FAD.

It belongs to the flavoprotein pyridine nucleotide cytochrome reductase family. It depends on FAD as a cofactor.

The enzyme catalyses 2 Fe(III)-[cytochrome b5] + NADH = 2 Fe(II)-[cytochrome b5] + NAD(+) + H(+). NADH-cytochrome b5 reductases are involved in desaturation and elongation of fatty acids, cholesterol biosynthesis, drug metabolism, and, in erythrocyte, methemoglobin reduction. This is NADH-cytochrome b5 reductase-like (Cyb5rl) from Mus musculus (Mouse).